Consider the following 284-residue polypeptide: Tropomyosin (284 aa).

The tract at residues 1–47 (MDAIKKKMQAMKIEKDNAMDRADAAEEKARQQQERVEKLEEELRDTQ) is disordered. The stretch at 1 to 284 (MDAIKKKMQA…DQTFQELSGY (284 aa)) forms a coiled coil. Positions 12 to 38 (KIEKDNAMDRADAAEEKARQQQERVEK) are enriched in basic and acidic residues.

It belongs to the tropomyosin family.

Its function is as follows. Tropomyosin, in association with the troponin complex, plays a central role in the calcium dependent regulation of muscle contraction. The sequence is that of Tropomyosin from Trichinella spiralis (Trichina worm).